We begin with the raw amino-acid sequence, 512 residues long: 2,3-bisphosphoglycerate-independent phosphoglycerate mutase (512 aa).

Mn(2+) contacts are provided by Asp-11 and Ser-61. Catalysis depends on Ser-61, which acts as the Phosphoserine intermediate. Substrate contacts are provided by residues His-122, 152 to 153, Arg-184, Arg-190, 259 to 262, and Lys-332; these read RD and RADR. Mn(2+)-binding residues include Asp-399, His-403, Asp-440, His-441, and His-459.

The protein belongs to the BPG-independent phosphoglycerate mutase family. As to quaternary structure, monomer. Requires Mn(2+) as cofactor.

The catalysed reaction is (2R)-2-phosphoglycerate = (2R)-3-phosphoglycerate. Its pathway is carbohydrate degradation; glycolysis; pyruvate from D-glyceraldehyde 3-phosphate: step 3/5. Its function is as follows. Catalyzes the interconversion of 2-phosphoglycerate and 3-phosphoglycerate. This Francisella tularensis subsp. tularensis (strain WY96-3418) protein is 2,3-bisphosphoglycerate-independent phosphoglycerate mutase.